The sequence spans 1647 residues: MAP kinase-activating death domain protein (1647 aa).

The uDENN domain occupies 14–268 (YLVIVGARHP…VPVSGQKRVD (255 aa)). The span at 108–122 (EKGEGGAGSRGKEGT) shows a compositional bias: basic and acidic residues. The interval 108–168 (EKGEGGAGSR…GKRRAKAGSR (61 aa)) is disordered. Residues 128-141 (SEEGGTESSESGSS) are compositionally biased toward low complexity. Residues 142–157 (LQPLSADSTPDVNQSP) are compositionally biased toward polar residues. Phosphoserine is present on serine 156. Basic residues predominate over residues 158-167 (RGKRRAKAGS). The region spanning 289–429 (RFTLVDFPLH…ESLELKKHLK (141 aa)) is the cDENN domain. A dDENN domain is found at 431–565 (ALASMSLNTQ…LNPTNYAFQR (135 aa)). 2 disordered regions span residues 604–636 (ALSV…SSYS) and 678–842 (NQKE…STEG). The span at 615–630 (SEPTDDSGSDSMDYDD) shows a compositional bias: acidic residues. A phosphoserine mark is found at serine 689 and serine 692. A compositionally biased stretch (polar residues) spans 689 to 699 (SENSQENPPLR). Low complexity predominate over residues 700–712 (SSSSTTASSSPST). Basic and acidic residues predominate over residues 750 to 768 (NVDRRQAEIGEGSVRRRIY). Polar residues predominate over residues 790 to 804 (ESYTPRFSQHVSGNR). Phosphoserine is present on residues serine 813, serine 818, and serine 820. Residues 827–840 (RASSPNSTVSNTST) show a composition bias toward low complexity. 5 positions are modified to phosphoserine: serine 858, serine 862, serine 916, serine 921, and serine 930. 3 disordered regions span residues 913–941 (QKSS…SSEN), 1051–1110 (KEPD…DTRS), and 1146–1243 (VFDL…DSEI). The span at 932 to 941 (QGRSSNSSEN) shows a compositional bias: polar residues. Serine 1059 carries the phosphoserine modification. Phosphothreonine is present on residues threonine 1061 and threonine 1066. Serine 1110 is subject to Phosphoserine. Polar residues-rich tracts occupy residues 1158–1173 (QISA…SSQR), 1189–1207 (RSSS…SSGE), and 1234–1243 (SRGTLSDSEI). Phosphothreonine is present on threonine 1237. 2 positions are modified to phosphoserine: serine 1239 and serine 1270. The region spanning 1340 to 1415 (GMDQGPQEMI…GLVYSQQINE (76 aa)) is the Death domain.

This sequence belongs to the MADD family. In terms of assembly, interacts (via death domain) with TNFRSF1A (via death domain). Interacts with PIDD1. Interacts with YWHAZ. Interacts (via death domain) with KIF1B; links the motor KIF1B to Rab3-carrying vesicles in anterograde synaptic vesicle transport. Interacts with KIF1A. Interacts (via uDENN domain) with RAB3A, RAB3B, RAB3C and RAB3D; the GTP-bound form of the Rab proteins is preferred for interaction. In terms of tissue distribution, expressed in testis, ovary, brain and heart. Expressed in spleen, thymus, prostate, testis, ovary, small instestine and colon. Expressed in liver. Not detected in the brain, breast, kidney, lung, ovary, pancreas, testis, uterus, stomach and thyroid. As to expression, expressed in the brain, breast, kidney, lung, ovary, pancreas, testis, uterus, stomach and thyroid.

The protein resides in the cell membrane. It is found in the cytoplasm. Its subcellular location is the cell projection. It localises to the axon. In terms of biological role, guanyl-nucleotide exchange factor that regulates small GTPases of the Rab family. Converts GDP-bound inactive form of RAB27A and RAB27B to the GTP-bound active forms. Converts GDP-bound inactive form of RAB3A, RAB3C and RAB3D to the GTP-bound active forms, GTPases involved in synaptic vesicle exocytosis and vesicle secretion. Plays a role in synaptic vesicle formation and in vesicle trafficking at the neuromuscular junction. Involved in up-regulating a post-docking step of synaptic exocytosis in central synapses. Probably by binding to the motor proteins KIF1B and KIF1A, mediates motor-dependent transport of GTP-RAB3A-positive vesicles to the presynaptic nerve terminals. Plays a role in TNFA-mediated activation of the MAPK pathway, including ERK1/2. May link TNFRSF1A with MAP kinase activation. May be involved in the regulation of TNFA-induced apoptosis. The sequence is that of MAP kinase-activating death domain protein from Homo sapiens (Human).